Consider the following 479-residue polypeptide: Octopamine receptor (479 aa).

Residues 1–57 lie on the Extracellular side of the membrane; the sequence is MGQAATHDANNYTSINYTEIYDVIEDEKDVCAVADEPNIPCSFGISLAVPEWEAICT. 2 N-linked (GlcNAc...) asparagine glycosylation sites follow: Asn11 and Asn16. Residues 58–80 traverse the membrane as a helical segment; sequence AIILTMIIISTVVGNILVILSVF. Residues 81–90 are Cytoplasmic-facing; sequence TYKPLRIVQN. A helical membrane pass occupies residues 91–112; sequence FFIVSLAVADLTVAILVLPLNV. Residues 113 to 129 lie on the Extracellular side of the membrane; sequence AYSILGQWVFGIYVCKM. The chain crosses the membrane as a helical span at residues 130 to 150; that stretch reads WLTCDIMCCTSSILNLCAIAL. Residues 151 to 170 lie on the Cytoplasmic side of the membrane; it reads DRYWAITDPINYAQKRTLER. The helical transmembrane segment at 171–193 threads the bilayer; that stretch reads VLFMIGIVWILSLVISSPPLLGW. Residues 194 to 218 are Extracellular-facing; it reads NDWPEVFEPDTPCRLTSQPGFVIFS. A helical transmembrane segment spans residues 219-240; it reads SSGSFYIPLVIMTVVYFEIYLA. Topologically, residues 241–407 are cytoplasmic; that stretch reads TKKRLRDRAK…LTRERRAART (167 aa). The disordered stretch occupies residues 260–319; it reads GRNKYETKESDPNDQDSVSSDANPNEHQGGTRLVAENEKKHRTRKLTPKKKPKRRYWSKD. The span at 274-287 shows a compositional bias: polar residues; that stretch reads QDSVSSDANPNEHQ. The span at 299–315 shows a compositional bias: basic residues; the sequence is KHRTRKLTPKKKPKRRY. A helical transmembrane segment spans residues 408–429; the sequence is LGIIMGVFVVCWLPFFVIYLVI. Topologically, residues 430-441 are extracellular; the sequence is PFCVSCCLSNKF. The chain crosses the membrane as a helical span at residues 442-462; that stretch reads INFITWLGYVNSALNPLIYTI. At 463–479 the chain is on the cytoplasmic side; the sequence is FNMDFRRAFKKLLFIKC.

It belongs to the G-protein coupled receptor 1 family.

The protein resides in the cell membrane. Functionally, receptor for octopamine. Octopamine (OA) is a neurotransmitter, neurohormone, and neuromodulator in invertebrates. The activity of this receptor is mediated by G proteins which activate adenylyl cyclase. This Bombyx mori (Silk moth) protein is Octopamine receptor.